Here is a 473-residue protein sequence, read N- to C-terminus: Bifunctional protein GlmU (473 aa).

The interval 1-241 (MATQPTPLTA…VGSLVGINDR (241 aa)) is pyrophosphorylase. Residues 13–16 (LAAG), Lys-27, Gln-84, and 89–90 (GT) each bind UDP-N-acetyl-alpha-D-glucosamine. Asp-114 provides a ligand contact to Mg(2+). UDP-N-acetyl-alpha-D-glucosamine is bound by residues Gly-152, Glu-167, Asn-182, and Asn-239. Position 239 (Asn-239) interacts with Mg(2+). Positions 242 to 262 (AQLAAAEEVLYGRIADRLRKS) are linker. The N-acetyltransferase stretch occupies residues 263 to 473 (GVTIRTSARI…KARLKDAAKK (211 aa)). Arg-343 and Lys-361 together coordinate UDP-N-acetyl-alpha-D-glucosamine. His-373 acts as the Proton acceptor in catalysis. Residues Tyr-376 and Asn-387 each contribute to the UDP-N-acetyl-alpha-D-glucosamine site. Acetyl-CoA is bound by residues Ala-390, 396–397 (NY), Ser-415, Thr-433, and Arg-450.

This sequence in the N-terminal section; belongs to the N-acetylglucosamine-1-phosphate uridyltransferase family. In the C-terminal section; belongs to the transferase hexapeptide repeat family. In terms of assembly, homotrimer. Requires Mg(2+) as cofactor.

Its subcellular location is the cytoplasm. It carries out the reaction alpha-D-glucosamine 1-phosphate + acetyl-CoA = N-acetyl-alpha-D-glucosamine 1-phosphate + CoA + H(+). The enzyme catalyses N-acetyl-alpha-D-glucosamine 1-phosphate + UTP + H(+) = UDP-N-acetyl-alpha-D-glucosamine + diphosphate. It participates in nucleotide-sugar biosynthesis; UDP-N-acetyl-alpha-D-glucosamine biosynthesis; N-acetyl-alpha-D-glucosamine 1-phosphate from alpha-D-glucosamine 6-phosphate (route II): step 2/2. It functions in the pathway nucleotide-sugar biosynthesis; UDP-N-acetyl-alpha-D-glucosamine biosynthesis; UDP-N-acetyl-alpha-D-glucosamine from N-acetyl-alpha-D-glucosamine 1-phosphate: step 1/1. Its pathway is bacterial outer membrane biogenesis; LPS lipid A biosynthesis. Catalyzes the last two sequential reactions in the de novo biosynthetic pathway for UDP-N-acetylglucosamine (UDP-GlcNAc). The C-terminal domain catalyzes the transfer of acetyl group from acetyl coenzyme A to glucosamine-1-phosphate (GlcN-1-P) to produce N-acetylglucosamine-1-phosphate (GlcNAc-1-P), which is converted into UDP-GlcNAc by the transfer of uridine 5-monophosphate (from uridine 5-triphosphate), a reaction catalyzed by the N-terminal domain. The polypeptide is Bifunctional protein GlmU (Sorangium cellulosum (strain So ce56) (Polyangium cellulosum (strain So ce56))).